The following is a 193-amino-acid chain: dCTP deaminase (193 aa).

Residues 110 to 115 (RSSLAR), D128, 136 to 138 (VLE), Y171, K178, and Q182 each bind dCTP. The active-site Proton donor/acceptor is the E138. The tract at residues 169 to 193 (RPYNRRQDAKYRDQQGAVASRIDKD) is disordered.

The protein belongs to the dCTP deaminase family. In terms of assembly, homotrimer.

The enzyme catalyses dCTP + H2O + H(+) = dUTP + NH4(+). It participates in pyrimidine metabolism; dUMP biosynthesis; dUMP from dCTP (dUTP route): step 1/2. Its function is as follows. Catalyzes the deamination of dCTP to dUTP. This Citrobacter koseri (strain ATCC BAA-895 / CDC 4225-83 / SGSC4696) protein is dCTP deaminase.